A 119-amino-acid polypeptide reads, in one-letter code: Large ribosomal subunit protein uL14 (119 aa).

It belongs to the universal ribosomal protein uL14 family. Part of the 50S ribosomal subunit. Forms a cluster with proteins L3 and L19. In the 70S ribosome, L14 and L19 interact and together make contacts with the 16S rRNA in bridges B5 and B8.

Its function is as follows. Binds to 23S rRNA. Forms part of two intersubunit bridges in the 70S ribosome. The polypeptide is Large ribosomal subunit protein uL14 (Wolbachia pipientis wMel).